Here is a 294-residue protein sequence, read N- to C-terminus: Shikimate dehydrogenase (NADP(+)) (294 aa).

Residues 14–16 and threonine 61 each bind shikimate; that span reads SKS. Lysine 65 serves as the catalytic Proton acceptor. Residue aspartate 77 participates in NADP(+) binding. Asparagine 86 and aspartate 102 together coordinate shikimate. NADP(+) is bound by residues 140-144 and leucine 235; that span reads GSGGA. Tyrosine 237 contributes to the shikimate binding site. Residue glycine 259 coordinates NADP(+).

The protein belongs to the shikimate dehydrogenase family. Homodimer.

It catalyses the reaction shikimate + NADP(+) = 3-dehydroshikimate + NADPH + H(+). It participates in metabolic intermediate biosynthesis; chorismate biosynthesis; chorismate from D-erythrose 4-phosphate and phosphoenolpyruvate: step 4/7. In terms of biological role, involved in the biosynthesis of the chorismate, which leads to the biosynthesis of aromatic amino acids. Catalyzes the reversible NADPH linked reduction of 3-dehydroshikimate (DHSA) to yield shikimate (SA). The chain is Shikimate dehydrogenase (NADP(+)) from Blochmanniella floridana.